Here is a 353-residue protein sequence, read N- to C-terminus: MKDTIPTAETASRRPEPAARGGRPRRRKLTFDRVTFFLAFLGVPLAIFVIFVLIPFGQAIFWGMTDWRGFSPDYNFVGFDNFTKMFQDDIFLKALRNVALLAAFVPLVTLTLALGVAVAITLGGPSKGPVRGIRGASFYRIISFFPYVVPAIIVGLIWAQMYDPNAGLLNGVLTGLGLDQFDTFAWLGEKAAAMPAVMFVIVWGLVGFYAVLFIAAIKGVPGELYEAAKIDGAGRFRTTISITLPAIRDSVQTAYIYLGIAALDAFVYVQAMVPNGGPDNSTLTISQRLFNVAFAKQQFGYATAMGVVLAAVTLVFAALVFLVNRLTGGGEGESKRKAPGSRARRAAAKGGAR.

Residues 1–24 (MKDTIPTAETASRRPEPAARGGRP) form a disordered region. 6 helical membrane passes run 36–56 (FFLA…LIPF), 100–120 (LLAA…AVAI), 141–161 (IISF…WAQM), 197–217 (VMFV…IAAI), 254–274 (AYIY…AMVP), and 303–323 (TAMG…VFLV). The 226-residue stretch at 95 to 320 (LRNVALLAAF…AVTLVFAALV (226 aa)) folds into the ABC transmembrane type-1 domain. Residues 329–353 (GGEGESKRKAPGSRARRAAAKGGAR) are disordered. A compositionally biased stretch (basic residues) spans 337–353 (KAPGSRARRAAAKGGAR).

The protein belongs to the binding-protein-dependent transport system permease family. As to quaternary structure, the complex is composed of two ATP-binding proteins (MsiK), two transmembrane proteins (NgcF and NgcG) and a solute-binding protein (NgcE).

It is found in the cell membrane. Its function is as follows. Part of the ABC transporter complex NgcEFG-MsiK involved in N,N'-diacetylchitobiose ((GlcNAc)2) uptake. Responsible for the translocation of the substrate across the membrane. The protein is Diacetylchitobiose uptake system permease protein NgcF of Streptomyces coelicolor (strain ATCC BAA-471 / A3(2) / M145).